A 101-amino-acid polypeptide reads, in one-letter code: Large ribosomal subunit protein P1 (101 aa).

Residues 61–72 (AAPAAAAAPAAA) show a composition bias toward low complexity. The segment at 61-101 (AAPAAAAAPAAAEEAEEEAEEEEEEEEAEEEAAAGLGALFG) is disordered. Residues 73 to 92 (EEAEEEAEEEEEEEEAEEEA) show a composition bias toward acidic residues.

The protein belongs to the eukaryotic ribosomal protein P1/P2 family. In terms of assembly, part of the 50S ribosomal subunit. Homodimer, it forms part of the ribosomal stalk which helps the ribosome interact with GTP-bound translation factors. Forms a heptameric uL10/P0(P1)2(P1)2(P1)2 complex, where uL10/P0 forms an elongated spine to which the P1 dimers bind in a sequential fashion.

In terms of biological role, forms part of the ribosomal stalk, playing a central role in the interaction of the ribosome with GTP-bound translation factors. The chain is Large ribosomal subunit protein P1 from Methanothermobacter thermautotrophicus (strain ATCC 29096 / DSM 1053 / JCM 10044 / NBRC 100330 / Delta H) (Methanobacterium thermoautotrophicum).